A 214-amino-acid polypeptide reads, in one-letter code: Probable transaldolase (214 aa).

The Schiff-base intermediate with substrate role is filled by lysine 83.

The protein belongs to the transaldolase family. Type 3B subfamily.

The protein localises to the cytoplasm. The catalysed reaction is D-sedoheptulose 7-phosphate + D-glyceraldehyde 3-phosphate = D-erythrose 4-phosphate + beta-D-fructose 6-phosphate. The protein operates within carbohydrate degradation; pentose phosphate pathway; D-glyceraldehyde 3-phosphate and beta-D-fructose 6-phosphate from D-ribose 5-phosphate and D-xylulose 5-phosphate (non-oxidative stage): step 2/3. Transaldolase is important for the balance of metabolites in the pentose-phosphate pathway. In Streptococcus pyogenes serotype M1, this protein is Probable transaldolase (tal).